The chain runs to 311 residues: Methionyl-tRNA formyltransferase (311 aa).

112-115 contributes to the (6S)-5,6,7,8-tetrahydrofolate binding site; it reads SLLP.

The protein belongs to the Fmt family.

It catalyses the reaction L-methionyl-tRNA(fMet) + (6R)-10-formyltetrahydrofolate = N-formyl-L-methionyl-tRNA(fMet) + (6S)-5,6,7,8-tetrahydrofolate + H(+). Its function is as follows. Attaches a formyl group to the free amino group of methionyl-tRNA(fMet). The formyl group appears to play a dual role in the initiator identity of N-formylmethionyl-tRNA by promoting its recognition by IF2 and preventing the misappropriation of this tRNA by the elongation apparatus. The sequence is that of Methionyl-tRNA formyltransferase from Geobacter metallireducens (strain ATCC 53774 / DSM 7210 / GS-15).